The primary structure comprises 20 residues: Antifreeze protein (20 aa).

In terms of processing, N-glycosylated and O-glycosylated.

Its subcellular location is the secreted. The protein localises to the extracellular space. Its function is as follows. Antifreeze proteins bind to the surface of ice crystals and inhibit the growth of these crystals, this inhibition causes thermal hysteresis. Causes the shape of ice crystals to change from hexagonal to a bipyramidal shape with rugged facets. Inhibits recrystallization of ice crystals. This chain is Antifreeze protein, found in Antarctomyces psychrotrophicus.